We begin with the raw amino-acid sequence, 122 residues long: MALSHSVKERTISENSLIILLQGLQGQITTVDLRDESVARGRIDNVDAFMNIRLANVTYTDRWGHQVELDDLFVTGRNVRYVHIPDGVDITATIEQQLQIIHRVRNFGGKGQGRREFPSKRP.

The region spanning 16–88 (SLIILLQGLQ…VRYVHIPDGV (73 aa)) is the Sm domain.

Belongs to the snRNP Sm proteins family. In terms of assembly, component of the heptameric ring U7 snRNP complex, or U7 Sm protein core complex, at least composed of LSM10, LSM11, SNRPB, SNRPD3, SNRPE, SNRPF, SNRPG and U7 snRNA. Formation of the U7 snRNP is an ATP-dependent process mediated by a specialized SMN complex containing at least the Sm protein core complex and additionally, the U7-specific LSM10 and LSM11 proteins. Interacts with CLNS1A and SMN. In terms of processing, not methylated. Methylation is not necessary for interaction with SMN.

The protein resides in the nucleus. Its function is as follows. Appears to function in the U7 snRNP complex that is involved in histone 3'-end processing. Increases U7 snRNA levels but not histone 3'-end pre-mRNA processing activity, when overexpressed. Required for cell cycle progression from G1 to S phases. Binds specifically to U7 snRNA. Binds to the downstream cleavage product (DCP) of histone pre-mRNA. In Mus musculus (Mouse), this protein is U7 snRNA-associated Sm-like protein LSm10 (Lsm10).